The sequence spans 342 residues: MKERIKAICLEKPNNVVVKEVPYPEKSDNDVLIQVESMGICGSDIGAYRGTNPLVTYPRILGHEIVGRVIESGIGMSDGVRVGDRVIVDPYVCCGQCYPCSIGRTNCCESLKVIGVHIDGGMQEVIRHPAHLLTKVPDNLPIHQLPLAEPLTIALHALHRTTLKSGEHIVIIGAGAIGLMAALAAVQYGAIPILVDILEQRLEYAKSLGIEHIVNPHKEDDIKRIKEITSGRMAEVVMEASGANISIKNTLHYASFAGRIALTGWPKTETPLPTNLITFKELNIYGSRTSKGEFEEALDMLATNKINASHIITKCIKFEEIPSFISDLSDHPENYLKINAVF.

The Zn(2+) site is built by C41, H63, C94, C97, C100, C108, and E149.

The protein belongs to the zinc-containing alcohol dehydrogenase family. Requires Zn(2+) as cofactor.

This is an uncharacterized protein from Haemophilus influenzae (strain ATCC 51907 / DSM 11121 / KW20 / Rd).